The chain runs to 205 residues: Probable transcription factor Ken (205 aa).

C2H2-type zinc fingers lie at residues 106–128 (YRCE…LRVH), 134–157 (FACR…CSVH), and 173–196 (YSCC…SGHH).

It localises to the nucleus. Its function is as follows. Probable transcription factor, which is required for terminalia development. The polypeptide is Probable transcription factor Ken (ken) (Drosophila yakuba (Fruit fly)).